The sequence spans 556 residues: Adenine deaminase (556 aa).

This sequence belongs to the metallo-dependent hydrolases superfamily. Adenine deaminase family. Requires Mn(2+) as cofactor.

It catalyses the reaction adenine + H2O + H(+) = hypoxanthine + NH4(+). The sequence is that of Adenine deaminase from Methanocaldococcus jannaschii (strain ATCC 43067 / DSM 2661 / JAL-1 / JCM 10045 / NBRC 100440) (Methanococcus jannaschii).